Consider the following 506-residue polypeptide: Lysine--tRNA ligase (506 aa).

Residues glutamate 416 and glutamate 423 each coordinate Mg(2+).

The protein belongs to the class-II aminoacyl-tRNA synthetase family. In terms of assembly, homodimer. Requires Mg(2+) as cofactor.

It localises to the cytoplasm. The enzyme catalyses tRNA(Lys) + L-lysine + ATP = L-lysyl-tRNA(Lys) + AMP + diphosphate. In Baumannia cicadellinicola subsp. Homalodisca coagulata, this protein is Lysine--tRNA ligase.